The primary structure comprises 272 residues: Phosphoglycolate phosphatase (272 aa).

The active-site Nucleophile is Asp-19. Asp-19, Asp-21, and Asp-182 together coordinate Mg(2+).

The protein belongs to the HAD-like hydrolase superfamily. CbbY/CbbZ/Gph/YieH family. Mg(2+) is required as a cofactor.

The enzyme catalyses 2-phosphoglycolate + H2O = glycolate + phosphate. It functions in the pathway organic acid metabolism; glycolate biosynthesis; glycolate from 2-phosphoglycolate: step 1/1. Functionally, specifically catalyzes the dephosphorylation of 2-phosphoglycolate. Is involved in the dissimilation of the intracellular 2-phosphoglycolate formed during the DNA repair of 3'-phosphoglycolate ends, a major class of DNA lesions induced by oxidative stress. This chain is Phosphoglycolate phosphatase, found in Pseudomonas savastanoi pv. phaseolicola (strain 1448A / Race 6) (Pseudomonas syringae pv. phaseolicola (strain 1448A / Race 6)).